The following is a 447-amino-acid chain: Hemopexin (447 aa).

Residues 1–18 (MRLIQALSLCLALSLSLA) form the signal peptide. The tract at residues 20 to 44 (PPQHKEDHSHKGKPGGEGHKHELHH) is disordered. Over residues 22-44 (QHKEDHSHKGKPGGEGHKHELHH) the composition is skewed to basic and acidic residues. Hemopexin repeat units follow at residues 53 to 93 (GIEF…FPEL), 99 to 151 (LGHV…FPGI), 152 to 197 (PDHL…FKSM), 198 to 243 (PNCT…FMRC), 262 to 304 (RVHL…FKEL), 305 to 351 (HSEV…VLGI), 352 to 395 (EGPV…TITQ), and 396 to 441 (FKRI…VSQQ). An N-linked (GlcNAc...) asparagine glycan is attached at asparagine 87. Asparagine 168 and asparagine 199 each carry an N-linked (GlcNAc...) asparagine glycan. Histidine 293 is a binding site for heme.

It belongs to the hemopexin family.

The protein localises to the secreted. In terms of biological role, binds heme and transports it to the liver for breakdown and iron recovery, after which the free hemopexin returns to the circulation. The protein is Hemopexin of Danio rerio (Zebrafish).